The sequence spans 498 residues: Probable cytosol aminopeptidase (498 aa).

Mn(2+) is bound by residues K262 and D267. The active site involves K274. Mn(2+) is bound by residues D285, D344, and E346. The active site involves R348.

Belongs to the peptidase M17 family. Mn(2+) is required as a cofactor.

It localises to the cytoplasm. The catalysed reaction is Release of an N-terminal amino acid, Xaa-|-Yaa-, in which Xaa is preferably Leu, but may be other amino acids including Pro although not Arg or Lys, and Yaa may be Pro. Amino acid amides and methyl esters are also readily hydrolyzed, but rates on arylamides are exceedingly low.. It carries out the reaction Release of an N-terminal amino acid, preferentially leucine, but not glutamic or aspartic acids.. Its function is as follows. Presumably involved in the processing and regular turnover of intracellular proteins. Catalyzes the removal of unsubstituted N-terminal amino acids from various peptides. The chain is Probable cytosol aminopeptidase from Phytoplasma mali (strain AT).